A 109-amino-acid chain; its full sequence is Cyclic di-AMP receptor A (109 aa).

Thr-21, Phe-25, Thr-28, Gly-35, Phe-36, Leu-37, Asn-41, Gly-47, Glu-92, and Gly-94 together coordinate 3',3'-c-di-AMP.

In terms of assembly, homotrimer.

It localises to the cytoplasm. Binds cyclic di-AMP (c-di-AMP) and is probably involved in c-di-AMP-mediated signaling pathways. In vitro, can also bind cyclic GMP-AMP (3'3'-cGAMP), with lower affinity, but not c-di-GMP or 2'3'-cGAMP. The chain is Cyclic di-AMP receptor A from Bacillus subtilis (strain 168).